A 443-amino-acid polypeptide reads, in one-letter code: Xaa-Pro dipeptidase (443 aa).

The Mn(2+) site is built by Asp-246, Asp-257, His-339, Glu-384, and Glu-423.

It belongs to the peptidase M24B family. Bacterial-type prolidase subfamily. Mn(2+) serves as cofactor.

It carries out the reaction Xaa-L-Pro dipeptide + H2O = an L-alpha-amino acid + L-proline. In terms of biological role, splits dipeptides with a prolyl residue in the C-terminal position. This is Xaa-Pro dipeptidase from Serratia proteamaculans (strain 568).